The sequence spans 1376 residues: YLP motif-containing protein 1 (1376 aa).

Disordered stretches follow at residues 1–335 and 511–1058; these read MYPN…PEED and STIP…PPGR. The segment covering 14–27 has biased composition (pro residues); the sequence is YPPPPVPPPPPPVA. Composition is skewed to low complexity over residues 31 to 50 and 59 to 80; these read ASPGPGYSSSTAPAAPSSSG and LAQLQQLQQMHQKQMQCVLQPH. Composition is skewed to pro residues over residues 81-93, 102-114, 148-158, 166-176, and 184-204; these read HLPPPPLPPPPVM, QPPPPPMPPPPGP, PESPPVPPGSY, MPPPQPPPSYY, and YLPPAQPSPSKPQLPPPPPSI. Polar residues-rich tracts occupy residues 207-216 and 238-260; these read GNKTTIQQEP and STMTPQEQQQYWYRQHLLSLQQR. Residues 261–271 show a composition bias toward basic residues; it reads TKVHLPGHKKG. Over residues 277–286 the composition is skewed to basic and acidic residues; the sequence is DVPEPIKEEA. 4 stretches are compositionally biased toward pro residues: residues 303-320, 511-537, 545-594, and 632-641; these read PPLPPPNEEMPPPLPPEE, STIPPPGMPPPVMPPSLPTSVPPPGMP, LPPP…PQGM, and PPSPYHPPPQ. Residues 642–671 show a composition bias toward polar residues; it reads SEQGNSKPLNKVFSSEQGLGESSSALSQSV. At K675 the chain carries N6-methyllysine. Basic and acidic residues predominate over residues 698-714; that stretch reads RGPREQKEQLQKLKDFG. 3 stretches are compositionally biased toward pro residues: residues 738-753, 773-796, and 840-870; these read MYPPPGSYRPPPPMGK, TRPPVPIPPPPPPPPPPPPPPPVI, and PVLPPPPVHPSIPPPGPMPMGMPPMSKPPPV. A Glycyl lysine isopeptide (Lys-Gly) (interchain with G-Cter in SUMO2) cross-link involves residue K886. Basic and acidic residues-rich tracts occupy residues 896–930, 937–1004, 1013–1023, and 1039–1058; these read ITLRPDPLPERSAFDADHAGQRDRYDRDRDREPYF, TDHR…DRPP, GERRTYPEERM, and RVEKKPESKNVDDILKPPGR. K943 participates in a covalent cross-link: Glycyl lysine isopeptide (Lys-Gly) (interchain with G-Cter in SUMO2). The interval 1326 to 1333 is involved in interaction with PPP1CA; sequence KKRVRWAD.

Interacts with PPP1CA and NCOA5. Forms a complex with ILF2, ILF3, KHDRBS1, RBMX, NCOA5 and PPP1CA. As to expression, high level expression seen in the brain, adipose tissue, heart and kidney, with a low level expression in muscle, spleen and lung (at protein level).

The protein resides in the nucleus. The protein localises to the nucleus speckle. Functionally, plays a role in the reduction of telomerase activity during differentiation of embryonic stem cells by binding to the core promoter of TERT and controlling its down-regulation. This is YLP motif-containing protein 1 (Ylpm1) from Rattus norvegicus (Rat).